The following is a 370-amino-acid chain: 3-dehydroquinate synthase (370 aa).

Residues 112–116 (GVIGD), 136–137 (TT), Lys149, Lys158, and 176–179 (TLKT) each bind NAD(+). Glu191, His256, and His273 together coordinate Zn(2+).

This sequence belongs to the sugar phosphate cyclases superfamily. Dehydroquinate synthase family. Requires Co(2+) as cofactor. It depends on Zn(2+) as a cofactor. NAD(+) serves as cofactor.

It is found in the cytoplasm. It catalyses the reaction 7-phospho-2-dehydro-3-deoxy-D-arabino-heptonate = 3-dehydroquinate + phosphate. It functions in the pathway metabolic intermediate biosynthesis; chorismate biosynthesis; chorismate from D-erythrose 4-phosphate and phosphoenolpyruvate: step 2/7. Its function is as follows. Catalyzes the conversion of 3-deoxy-D-arabino-heptulosonate 7-phosphate (DAHP) to dehydroquinate (DHQ). The sequence is that of 3-dehydroquinate synthase from Prochlorococcus marinus (strain MIT 9211).